We begin with the raw amino-acid sequence, 649 residues long: Sulfate transporter 1.1 (649 aa).

Positions Met-1–Val-20 are disordered. At Met-1 to Arg-86 the chain is on the cytoplasmic side. Residues Gly-87–Ala-107 traverse the membrane as a helical segment. The Extracellular segment spans residues Lys-108–Asn-111. A helical membrane pass occupies residues Val-112–Gly-132. The Cytoplasmic portion of the chain corresponds to Ser-133–Asp-136. A helical membrane pass occupies residues Ile-137 to Ile-157. The Extracellular portion of the chain corresponds to Asp-158–Arg-168. A run of 2 helical transmembrane segments spans residues Leu-169–Leu-189 and Gly-190–Ile-210. Over Thr-211–Asn-248 the chain is Extracellular. A helical transmembrane segment spans residues Trp-249–Gly-269. Over Lys-270–Leu-275 the chain is Cytoplasmic. A helical membrane pass occupies residues Phe-276–Ile-296. Residues Phe-297–Arg-334 lie on the Extracellular side of the membrane. The helical transmembrane segment at Ile-335–Ala-355 threads the bilayer. The Cytoplasmic portion of the chain corresponds to Ala-356 to Glu-367. A helical transmembrane segment spans residues Met-368–Gly-388. At Ser-389 to Ala-404 the chain is on the extracellular side. A helical membrane pass occupies residues Val-405–Phe-425. Topologically, residues Lys-426–Ala-431 are cytoplasmic. Residues Ile-432–Leu-452 form a helical membrane-spanning segment. Topologically, residues Ile-453 to Met-465 are extracellular. The chain crosses the membrane as a helical span at residues Gly-466–Ile-486. The Cytoplasmic portion of the chain corresponds to Ser-487 to Thr-649. The 124-residue stretch at Gln-517–Cys-640 folds into the STAS domain.

It belongs to the SLC26A/SulP transporter (TC 2.A.53) family. Interacts with OASA1 through its STAS domain. As to expression, expressed in lateral root cap, root hairs, epidermal and cortical cells of roots.

It localises to the membrane. In terms of biological role, high-affinity H(+)/sulfate cotransporter that mediates the uptake of the environmental sulfate by plant roots under low-sulfur conditions. Plays a central role in the regulation of sulfate assimilation. The polypeptide is Sulfate transporter 1.1 (SULTR1;1) (Arabidopsis thaliana (Mouse-ear cress)).